The chain runs to 61 residues: Translational regulator CsrA (61 aa).

Belongs to the CsrA/RsmA family. Homodimer; the beta-strands of each monomer intercalate to form a hydrophobic core, while the alpha-helices form wings that extend away from the core.

The protein resides in the cytoplasm. A key translational regulator that binds mRNA to regulate translation initiation and/or mRNA stability. Mediates global changes in gene expression, shifting from rapid growth to stress survival by linking envelope stress, the stringent response and the catabolite repression systems. Usually binds in the 5'-UTR; binding at or near the Shine-Dalgarno sequence prevents ribosome-binding, repressing translation, binding elsewhere in the 5'-UTR can activate translation and/or stabilize the mRNA. Its function is antagonized by small RNA(s). This is Translational regulator CsrA from Glaesserella parasuis serovar 5 (strain SH0165) (Haemophilus parasuis).